The following is an 880-amino-acid chain: Leucine--tRNA ligase (880 aa).

The 'HIGH' region signature appears at 46 to 56 (PYPSGALHMGH). Residues 638-642 (KMSKS) carry the 'KMSKS' region motif. Lys641 provides a ligand contact to ATP.

This sequence belongs to the class-I aminoacyl-tRNA synthetase family.

The protein localises to the cytoplasm. The catalysed reaction is tRNA(Leu) + L-leucine + ATP = L-leucyl-tRNA(Leu) + AMP + diphosphate. The protein is Leucine--tRNA ligase of Stenotrophomonas maltophilia (strain K279a).